Here is a 155-residue protein sequence, read N- to C-terminus: Small ribosomal subunit protein uS7c (155 aa).

It belongs to the universal ribosomal protein uS7 family. Part of the 30S ribosomal subunit.

It is found in the plastid. It localises to the chloroplast. In terms of biological role, one of the primary rRNA binding proteins, it binds directly to 16S rRNA where it nucleates assembly of the head domain of the 30S subunit. This is Small ribosomal subunit protein uS7c (rps7) from Spirogyra maxima (Green alga).